Here is a 123-residue protein sequence, read N- to C-terminus: VQ motif-containing protein 29 (123 aa).

Residues 24 to 55 form a disordered region; that stretch reads TKNYLTSLHSTRKQPSKPLKRPAISSPLNPMH. The span at 33–43 shows a compositional bias: basic residues; sequence STRKQPSKPLK. The VQ signature appears at 66–75; the sequence is FKVLVQRLTG. Residues 77 to 94 show a composition bias toward basic and acidic residues; that stretch reads PEHETVQAKPLKTSDDAA. Residues 77–123 form a disordered region; sequence PEHETVQAKPLKTSDDAAKQSSSSFAFDPSSSWGDFSFQNPANISRW. Over residues 97-108 the composition is skewed to low complexity; the sequence is SSSSFAFDPSSS. Polar residues predominate over residues 109–123; that stretch reads WGDFSFQNPANISRW.

Its subcellular location is the nucleus. Functionally, may function as negative regulator of flowering transition. The sequence is that of VQ motif-containing protein 29 from Arabidopsis thaliana (Mouse-ear cress).